The following is a 559-amino-acid chain: Probable inorganic carbon transporter subunit DabB1 (559 aa).

13 helical membrane-spanning segments follow: residues Leu-4–Ala-24, Leu-33–Ile-53, Leu-76–Ile-96, Pro-106–Gly-126, Leu-173–Phe-193, Ala-202–Phe-222, Gly-240–Ile-260, Val-273–Leu-293, Met-310–Ile-330, Leu-375–Ala-395, Gly-408–His-428, Met-440–Phe-460, and Gly-487–Ser-507.

It belongs to the inorganic carbon transporter (TC 9.A.2) DabB family. In terms of assembly, forms a complex with DabA1.

It localises to the cell inner membrane. Its function is as follows. Part of an energy-coupled inorganic carbon pump. This Halothiobacillus neapolitanus (strain ATCC 23641 / c2) (Thiobacillus neapolitanus) protein is Probable inorganic carbon transporter subunit DabB1.